We begin with the raw amino-acid sequence, 111 residues long: MKHYEIVLMIHPDQSEQLDAMLSKYRGIIEEKGGKIHRFEDWGRRQLAYPIEKLHKAHYVLFNVECDVESLEKLQENLKYNDAVLRRLVISKKEAVTEPSIMMETNEKEVI.

This sequence belongs to the bacterial ribosomal protein bS6 family.

In terms of biological role, binds together with bS18 to 16S ribosomal RNA. This is Small ribosomal subunit protein bS6 from Francisella philomiragia subsp. philomiragia (strain ATCC 25017 / CCUG 19701 / FSC 153 / O#319-036).